The chain runs to 390 residues: MPPSGLRLLPLLLPLLWLLVLTPGRPAAGLSTCKTIDMELVKRKRIEAIRGQILSKLRLASPPSQGEVPPGPLPEAVLALYNSTRDRVAGESAEPEPEPEADYYAKEVTRVLMVETHNEIYDKFKQSTHSIYMFFNTSELREAVPEPVLLSRAELRLLRLKLKVEQHVELYQKYSNNSWRYLSNRLLAPSDSPEWLSFDVTGVVRQWLSRGGEIEGFRLSAHCSCDSRDNTLQVDINGFTTGRRGDLATIHGMNRPFLLLMATPLERAQHLQSSRHRRALDTNYCFSSTEKNCCVRQLYIDFRKDLGWKWIHEPKGYHANFCLGPCPYIWSLDTQYSKVLALYNQHNPGASAAPCCVPQALEPLPIVYYVGRKPKVEQLSNMIVRSCKCS.

The N-terminal stretch at 1–29 (MPPSGLRLLPLLLPLLWLLVLTPGRPAAG) is a signal peptide. A straightjacket domain region spans residues 30–74 (LSTCKTIDMELVKRKRIEAIRGQILSKLRLASPPSQGEVPPGPLP). Residues 75-271 (EAVLALYNST…ATPLERAQHL (197 aa)) form an arm domain region. Residues N82, N136, and N176 are each glycosylated (N-linked (GlcNAc...) asparagine). The interval 226-252 (DSRDNTLQVDINGFTTGRRGDLATIHG) is bowtie tail. The Cell attachment site signature appears at 244–246 (RGD). 4 disulfide bridges follow: C285–C294, C293–C356, C322–C387, and C326–C389.

This sequence belongs to the TGF-beta family. In terms of assembly, homodimer; disulfide-linked. Interacts with the serine proteases, HTRA1 and HTRA3: the interaction with either inhibits TGFB1-mediated signaling and the HTRA protease activity is required for this inhibition. May interact with THSD4; this interaction may lead to sequestration by FBN1 microfibril assembly and attenuation of TGFB signaling. Interacts with CD109, DPT and ASPN. Interacts with EFEMP2. Interacts with TSKU; the interaction contributes to regulation of the hair cycle. Homodimer; disulfide-linked. Interacts with transforming growth factor beta-1 (TGF-beta-1) chain; interaction is non-covalent and maintains TGF-beta-1 in a latent state; each latency-associated peptide (LAP) monomer interacts with TGF-beta-1 in the other monomer. Interacts with LTBP1; leading to regulation of TGF-beta-1 activation. Interacts with LRRC32/GARP; leading to regulation of TGF-beta-1 activation on the surface of activated regulatory T-cells (Tregs). Interacts with LRRC33/NRROS; leading to regulation of TGF-beta-1 in macrophages and microglia. Interacts (via cell attachment site) with integrins ITGAV and ITGB6 (ITGAV:ITGB6), leading to release of the active TGF-beta-1. Interacts with NREP; the interaction results in a decrease in TGFB1 autoinduction. Interacts with HSP90AB1; inhibits latent TGFB1 activation. Interact with PSG9; leading to TGFB1 activation. Interacts with TGFBR3. As to quaternary structure, homodimer; disulfide-linked. Interacts with TGF-beta receptors (TGFBR1 and TGFBR2), leading to signal transduction. In terms of processing, transforming growth factor beta-1 proprotein: The precursor proprotein is cleaved in the Golgi apparatus by FURIN to form Transforming growth factor beta-1 (TGF-beta-1) and Latency-associated peptide (LAP) chains, which remain non-covalently linked, rendering TGF-beta-1 inactive. N-glycosylated. Deglycosylation leads to activation of Transforming growth factor beta-1 (TGF-beta-1); mechanisms triggering deglycosylation-driven activation of TGF-beta-1 are however unclear. Highly expressed in bone. Abundantly expressed in articular cartilage and chondrocytes and is increased in osteoarthritis (OA). Colocalizes with ASPN in chondrocytes within OA lesions of articular cartilage.

The protein localises to the secreted. The protein resides in the extracellular space. Its subcellular location is the extracellular matrix. Its function is as follows. Transforming growth factor beta-1 proprotein: Precursor of the Latency-associated peptide (LAP) and Transforming growth factor beta-1 (TGF-beta-1) chains, which constitute the regulatory and active subunit of TGF-beta-1, respectively. In terms of biological role, required to maintain the Transforming growth factor beta-1 (TGF-beta-1) chain in a latent state during storage in extracellular matrix. Associates non-covalently with TGF-beta-1 and regulates its activation via interaction with 'milieu molecules', such as LTBP1, LRRC32/GARP and LRRC33/NRROS, that control activation of TGF-beta-1. Interaction with LRRC33/NRROS regulates activation of TGF-beta-1 in macrophages and microglia. Interaction with LRRC32/GARP controls activation of TGF-beta-1 on the surface of activated regulatory T-cells (Tregs). Interaction with integrins (ITGAV:ITGB6 or ITGAV:ITGB8) results in distortion of the Latency-associated peptide chain and subsequent release of the active TGF-beta-1. Functionally, multifunctional protein that regulates the growth and differentiation of various cell types and is involved in various processes, such as normal development, immune function, microglia function and responses to neurodegeneration. Activation into mature form follows different steps: following cleavage of the proprotein in the Golgi apparatus, Latency-associated peptide (LAP) and Transforming growth factor beta-1 (TGF-beta-1) chains remain non-covalently linked rendering TGF-beta-1 inactive during storage in extracellular matrix. At the same time, LAP chain interacts with 'milieu molecules', such as LTBP1, LRRC32/GARP and LRRC33/NRROS that control activation of TGF-beta-1 and maintain it in a latent state during storage in extracellular milieus. TGF-beta-1 is released from LAP by integrins (ITGAV:ITGB6 or ITGAV:ITGB8): integrin-binding to LAP stabilizes an alternative conformation of the LAP bowtie tail and results in distortion of the LAP chain and subsequent release of the active TGF-beta-1. Once activated following release of LAP, TGF-beta-1 acts by binding to TGF-beta receptors (TGFBR1 and TGFBR2), which transduce signal. While expressed by many cells types, TGF-beta-1 only has a very localized range of action within cell environment thanks to fine regulation of its activation by Latency-associated peptide chain (LAP) and 'milieu molecules'. Plays an important role in bone remodeling: acts as a potent stimulator of osteoblastic bone formation, causing chemotaxis, proliferation and differentiation in committed osteoblasts. Can promote either T-helper 17 cells (Th17) or regulatory T-cells (Treg) lineage differentiation in a concentration-dependent manner. At high concentrations, leads to FOXP3-mediated suppression of RORC and down-regulation of IL-17 expression, favoring Treg cell development. At low concentrations in concert with IL-6 and IL-21, leads to expression of the IL-17 and IL-23 receptors, favoring differentiation to Th17 cells. Stimulates sustained production of collagen through the activation of CREB3L1 by regulated intramembrane proteolysis (RIP). Mediates SMAD2/3 activation by inducing its phosphorylation and subsequent translocation to the nucleus. Positively regulates odontoblastic differentiation in dental papilla cells, via promotion of IPO7-mediated translocation of phosphorylated SMAD2 to the nucleus and subsequent transcription of target genes. Can induce epithelial-to-mesenchymal transition (EMT) and cell migration in various cell types. The chain is Transforming growth factor beta-1 proprotein from Homo sapiens (Human).